The sequence spans 229 residues: ATP synthase subunit a (229 aa).

Helical transmembrane passes span 24–44, 45–65, 83–103, 117–137, 143–163, 177–199, and 206–228; these read RLCFIVYFNCLMLIFDFLLFC, LFDLYLFVGLCLFLLLWFMLF, LLFCIVFLLYIAFLFLFCFLC, FMDVFFIRFLLCFLECFSLLC, FLRLFCNLLSSHFLLLMFFDF, CYFILFIFVFCFCLLFYVFLYLL, and LQLFIFCNMILQLIMDFLLFLLF.

Belongs to the ATPase A chain family. In terms of assembly, F-type ATPases have 2 components, CF(1) - the catalytic core - and CF(0) - the membrane proton channel. CF(1) has five subunits: alpha(3), beta(3), gamma(1), delta(1), epsilon(1). CF(0) has three main subunits: a, b and c.

It is found in the mitochondrion inner membrane. Its function is as follows. Mitochondrial membrane ATP synthase (F(1)F(0) ATP synthase or Complex V) produces ATP from ADP in the presence of a proton gradient across the membrane which is generated by electron transport complexes of the respiratory chain. F-type ATPases consist of two structural domains, F(1) - containing the extramembraneous catalytic core and F(0) - containing the membrane proton channel, linked together by a central stalk and a peripheral stalk. During catalysis, ATP synthesis in the catalytic domain of F(1) is coupled via a rotary mechanism of the central stalk subunits to proton translocation. Key component of the proton channel; it may play a direct role in the translocation of protons across the membrane. This is ATP synthase subunit a (ATP6) from Trypanosoma brucei brucei.